We begin with the raw amino-acid sequence, 424 residues long: Cuticlin-1 (424 aa).

A signal peptide spans 1–18 (MTWKPIICLAALVLSASA). The Extracellular portion of the chain corresponds to 19 to 392 (IPVDNNVEGE…ATSTGICLTP (374 aa)). Positions 32-277 (ECGPNSITVN…PTCSEPQGFG (246 aa)) constitute a ZP domain. An intrachain disulfide couples Cys197 to Cys252. 4 consecutive repeat copies span residues 302–305 (AAPV), 307–311 (AAAPV), 312–315 (AAPV), and 320–323 (AAPA). The 4 X 4 AA repeats of A-A-P-[AVI] stretch occupies residues 302 to 323 (AAPVAAAAPVAAPVAAAAAAPA). The helical transmembrane segment at 393-413 (IGFASFLGIGTIVATALSATI) threads the bilayer. Residues 414 to 424 (FYVARPTSHKH) are Cytoplasmic-facing.

It localises to the cell membrane. The protein localises to the secreted. Its function is as follows. Component of the cuticles, which contributes to the formation of extracellular envelopes protecting the organism from the environment. Plays a role in alae formation in dauer larvae. This is Cuticlin-1 from Caenorhabditis elegans.